Reading from the N-terminus, the 194-residue chain is ATP-dependent Clp protease proteolytic subunit (194 aa).

Ser-98 (nucleophile) is an active-site residue. The active site involves His-123.

This sequence belongs to the peptidase S14 family. In terms of assembly, fourteen ClpP subunits assemble into 2 heptameric rings which stack back to back to give a disk-like structure with a central cavity, resembling the structure of eukaryotic proteasomes.

It is found in the cytoplasm. It carries out the reaction Hydrolysis of proteins to small peptides in the presence of ATP and magnesium. alpha-casein is the usual test substrate. In the absence of ATP, only oligopeptides shorter than five residues are hydrolyzed (such as succinyl-Leu-Tyr-|-NHMec, and Leu-Tyr-Leu-|-Tyr-Trp, in which cleavage of the -Tyr-|-Leu- and -Tyr-|-Trp bonds also occurs).. Its function is as follows. Cleaves peptides in various proteins in a process that requires ATP hydrolysis. Has a chymotrypsin-like activity. Plays a major role in the degradation of misfolded proteins. The polypeptide is ATP-dependent Clp protease proteolytic subunit (Clostridium tetani (strain Massachusetts / E88)).